A 418-amino-acid polypeptide reads, in one-letter code: Glutamyl-tRNA reductase (418 aa).

Residues 49–52 (TCNR), serine 109, 114–116 (EPQ), and glutamine 120 contribute to the substrate site. Cysteine 50 functions as the Nucleophile in the catalytic mechanism. Residue 189–194 (GAGETI) participates in NADP(+) binding.

This sequence belongs to the glutamyl-tRNA reductase family. In terms of assembly, homodimer.

It carries out the reaction (S)-4-amino-5-oxopentanoate + tRNA(Glu) + NADP(+) = L-glutamyl-tRNA(Glu) + NADPH + H(+). The protein operates within porphyrin-containing compound metabolism; protoporphyrin-IX biosynthesis; 5-aminolevulinate from L-glutamyl-tRNA(Glu): step 1/2. Its function is as follows. Catalyzes the NADPH-dependent reduction of glutamyl-tRNA(Glu) to glutamate 1-semialdehyde (GSA). This is Glutamyl-tRNA reductase from Salmonella dublin (strain CT_02021853).